The following is a 292-amino-acid chain: 33 kDa chaperonin (292 aa).

Cystine bridges form between Cys230/Cys232 and Cys263/Cys266.

The protein belongs to the HSP33 family. Under oxidizing conditions two disulfide bonds are formed involving the reactive cysteines. Under reducing conditions zinc is bound to the reactive cysteines and the protein is inactive.

The protein localises to the cytoplasm. Its function is as follows. Redox regulated molecular chaperone. Protects both thermally unfolding and oxidatively damaged proteins from irreversible aggregation. Plays an important role in the bacterial defense system toward oxidative stress. This chain is 33 kDa chaperonin, found in Cronobacter sakazakii (strain ATCC BAA-894) (Enterobacter sakazakii).